The chain runs to 288 residues: Sulfur carrier protein FdhD (288 aa).

Residues 1 to 23 (MMRCMQSPEVHPAAAGDAEPPTH) form a disordered region. Cys127 functions as the Cysteine persulfide intermediate in the catalytic mechanism.

This sequence belongs to the FdhD family.

It is found in the cytoplasm. Functionally, required for formate dehydrogenase (FDH) activity. Acts as a sulfur carrier protein that transfers sulfur from IscS to the molybdenum cofactor prior to its insertion into FDH. The polypeptide is Sulfur carrier protein FdhD (Cupriavidus necator (strain ATCC 17699 / DSM 428 / KCTC 22496 / NCIMB 10442 / H16 / Stanier 337) (Ralstonia eutropha)).